The primary structure comprises 508 residues: Pyruvate kinase (508 aa).

Residue arginine 56 coordinates substrate. K(+) contacts are provided by asparagine 58, serine 60, aspartate 90, and threonine 91. An ATP-binding site is contributed by 58–61 (NFSH). ATP-binding residues include arginine 97 and lysine 185. Glutamate 251 contacts Mg(2+). Residues glycine 274, aspartate 275, and threonine 307 each coordinate substrate. Residue aspartate 275 participates in Mg(2+) binding.

It belongs to the pyruvate kinase family. As to quaternary structure, homotetramer. It depends on Mg(2+) as a cofactor. K(+) serves as cofactor.

The catalysed reaction is pyruvate + ATP = phosphoenolpyruvate + ADP + H(+). It participates in carbohydrate degradation; glycolysis; pyruvate from D-glyceraldehyde 3-phosphate: step 5/5. Regulated by phosphoenolpyruvate substrate and is allosterically activated by ribose-5-phosphate, AMP and other nucleoside monophosphates but not by fructose-1,6-bisphosphate. This is Pyruvate kinase (pyk) from Mycoplasma pneumoniae (strain ATCC 29342 / M129 / Subtype 1) (Mycoplasmoides pneumoniae).